Reading from the N-terminus, the 158-residue chain is Protein Smg homolog (158 aa).

The protein belongs to the Smg family.

This chain is Protein Smg homolog, found in Vibrio atlanticus (strain LGP32) (Vibrio splendidus (strain Mel32)).